The sequence spans 383 residues: Paralemmin-1 (383 aa).

Met-1 bears the N-acetylmethionine mark. The stretch at 5-102 forms a coiled coil; it reads ATDTASQQER…KEIDVLEFGE (98 aa). 3 disordered regions span residues 51–163, 242–295, and 334–375; these read RERW…GSTM, TLSE…GQEP, and ATPR…MKKP. Residues 69 to 96 show a composition bias toward basic and acidic residues; that stretch reads DMRKQMQEDEQKARGLEESITRLEKEID. Polar residues-rich tracts occupy residues 109 to 124 and 133 to 143; these read KENSAAPSPGRPQSAS and ETLVNAQQTPL. 3 positions are modified to phosphoserine: Ser-116, Ser-122, and Ser-124. Thr-141, Thr-145, and Thr-153 each carry phosphothreonine. A phosphoserine mark is found at Ser-157 and Ser-161. Residue Thr-242 is modified to Phosphothreonine. Ser-244 carries the post-translational modification Phosphoserine. Residues 257 to 273 are compositionally biased toward basic and acidic residues; it reads GLAEDVTRTTPSRREIT. Positions 285–295 are enriched in low complexity; that stretch reads GPPGIQPGQEP. Ser-345 is modified (phosphoserine). Residues 357–367 show a composition bias toward polar residues; sequence QTGPTTTPSDT. Thr-361, Thr-362, and Thr-363 each carry phosphothreonine. Phosphoserine is present on Ser-365. Thr-367 carries the post-translational modification Phosphothreonine. 2 S-palmitoyl cysteine lipidation sites follow: Cys-377 and Cys-379. A Cysteine methyl ester modification is found at Cys-380. A lipid anchor (S-farnesyl cysteine) is attached at Cys-380. A propeptide spans 381-383 (removed in mature form); that stretch reads SVM.

Belongs to the paralemmin family. Interacts with dopamine receptor DRD3. As to expression, expression is highest in brain, intermediate in adrenal gland and kidney, and much lower or undetectable in other tissues. Isoform 1 is the predominant isoform in most tissues except brain and kidney where isoform 2 predominates.

Its subcellular location is the cell membrane. It is found in the cell projection. The protein resides in the filopodium membrane. It localises to the axon. The protein localises to the dendrite. Its subcellular location is the dendritic spine. It is found in the basolateral cell membrane. The protein resides in the apicolateral cell membrane. Functionally, involved in plasma membrane dynamics and cell process formation. Isoform 1 and isoform 2 are necessary for axonal and dendritic filopodia induction, for dendritic spine maturation and synapse formation in a palmitoylation-dependent manner. The polypeptide is Paralemmin-1 (Palm) (Mus musculus (Mouse)).